Reading from the N-terminus, the 430-residue chain is MKTTIKQAKDHLNQDVTIGAWLTNKRSSGKIAFLQLRDGTGFMQGVVVKSEVDEEVFKLAKEITQESSLYVTGTITEDNRSDLGYEMQVKSIEVISEAHDYPITPKNHGTEFLMDHRHLWLRSKKQHAVMKIRNEVIRATYEFFNKDGFTKVDPPILTASAPEGTSELFHTKYFDQDAFLSQSGQLYLEAAAMAHGKVFSFGPTFRAEKSKTRRHLIEFWMIEGEMAFTNHAESLEIQEQYVTHVVKSVLENCKLELKMLERDTSKLEKVATPFPRISYDDAIEFLKAEGFDDIEWGEDFGAPHETAIANHYDLPVFITNYPTKIKPFYMQPNPENEETVLCADLIAPEGYGEIIGGSERVDDLELLEQRVKEHGLDEEAYSYYLDLRRYGSVPHCGFGLGLERTVAWISGVEHVRETAPFPRLLNRLYP.

Belongs to the class-II aminoacyl-tRNA synthetase family. As to quaternary structure, homodimer.

It is found in the cytoplasm. It carries out the reaction tRNA(Asn) + L-asparagine + ATP = L-asparaginyl-tRNA(Asn) + AMP + diphosphate + H(+). The chain is Asparagine--tRNA ligase from Staphylococcus aureus (strain MRSA252).